The sequence spans 428 residues: Enolase (428 aa).

Gln163 contacts (2R)-2-phosphoglycerate. Glu205 functions as the Proton donor in the catalytic mechanism. Residues Asp242, Glu285, and Asp312 each contribute to the Mg(2+) site. Residues Lys337, Arg366, Ser367, and Lys388 each coordinate (2R)-2-phosphoglycerate. Residue Lys337 is the Proton acceptor of the active site.

The protein belongs to the enolase family. The cofactor is Mg(2+).

It is found in the cytoplasm. Its subcellular location is the secreted. It localises to the cell surface. The catalysed reaction is (2R)-2-phosphoglycerate = phosphoenolpyruvate + H2O. Its pathway is carbohydrate degradation; glycolysis; pyruvate from D-glyceraldehyde 3-phosphate: step 4/5. In terms of biological role, catalyzes the reversible conversion of 2-phosphoglycerate (2-PG) into phosphoenolpyruvate (PEP). It is essential for the degradation of carbohydrates via glycolysis. The polypeptide is Enolase (Brevibacillus brevis (strain 47 / JCM 6285 / NBRC 100599)).